We begin with the raw amino-acid sequence, 265 residues long: Cell division protein DivIB (265 aa).

At 1-30 (MKNSKVIKLQDRVPKLKNQQKKKKKNVNHR) the chain is on the cytoplasmic side. The helical transmembrane segment at 31–51 (LILYISILFLLVLFLIYFRSP) threads the bilayer. Residues 52-265 (LSNIKKISVF…NRMIVFNTLS (214 aa)) are Extracellular-facing. Residues 53–121 (SNIKKISVFG…NKIDVHIEEY (69 aa)) enclose the POTRA domain.

Belongs to the FtsQ/DivIB family. DivIB subfamily.

The protein localises to the cell membrane. Its function is as follows. Cell division protein that may be involved in stabilizing or promoting the assembly of the division complex. The chain is Cell division protein DivIB from Bacillus anthracis.